We begin with the raw amino-acid sequence, 779 residues long: 3-isopropylmalate dehydratase (779 aa).

Cys-360, Cys-421, and Cys-424 together coordinate [4Fe-4S] cluster. Residues 484–518 (QDQSSPKVEVTSEDEKELESAAYDHAEPVQPEDAP) form a disordered region. Ser-488 is modified (phosphoserine). Residue Thr-494 is modified to Phosphothreonine. At Ser-495 the chain carries Phosphoserine. Residues 501–510 (LESAAYDHAE) show a composition bias toward basic and acidic residues.

This sequence belongs to the aconitase/IPM isomerase family. Monomer. [4Fe-4S] cluster serves as cofactor.

It catalyses the reaction (2R,3S)-3-isopropylmalate = (2S)-2-isopropylmalate. The protein operates within amino-acid biosynthesis; L-leucine biosynthesis; L-leucine from 3-methyl-2-oxobutanoate: step 2/4. Functionally, catalyzes the isomerization between 2-isopropylmalate and 3-isopropylmalate, via the formation of 2-isopropylmaleate. The protein is 3-isopropylmalate dehydratase (LEU1) of Saccharomyces cerevisiae (strain ATCC 204508 / S288c) (Baker's yeast).